The following is a 379-amino-acid chain: Ascochitine biosynthesis cluster protein 8 (379 aa).

3 helical membrane passes run Glu87–Glu107, Val116–Cys136, and Ile141–Leu161.

Its subcellular location is the membrane. The protein operates within mycotoxin biosynthesis. Functionally, part of the gene cluster that mediates the biosynthesis of the selective antifungal agent ascochitine, an o-quinone methide that plays a possible protective role against other microbial competitors in nature and is considered to be important for pathogenicity of legume-associated Didymella species. The pathway probably begins with the synthesis of a keto-aldehyde intermediate by the ascochitine non-reducing polyketide synthase pksAC from successive condensations of 4 malonyl-CoA units, presumably with a simple acetyl-CoA starter unit. Release of the keto-aldehyde intermediate is consistent with the presence of the C-terminal reductive release domain. The HR-PKS (orf7) probably makes a diketide starter unit which is passed to the non-reducing polyketide synthase pksAC for further extension, producing ascochital and ascochitine. The aldehyde dehydrogenase (orf1), the 2-oxoglutarate-dependent dioxygenase (orf3) and the dehydrogenase (orf9) are probably involved in subsequent oxidations of methyl groups to the carboxylic acid of the heterocyclic ring. The ascochitine gene cluster also includes a gene encoding a short peptide with a cupin domain (orf2) that is often found in secondary metabolite gene clusters and which function has still to be determined. This Didymella fabae (Leaf and pod spot disease fungus) protein is Ascochitine biosynthesis cluster protein 8.